The chain runs to 527 residues: Putative BTB/POZ domain-containing protein R225 (527 aa).

Positions 16–89 (TDLELVLTDP…YGQTNRSTDY (74 aa)) constitute a BTB domain.

This sequence belongs to the mimivirus BTB/WD family.

This chain is Putative BTB/POZ domain-containing protein R225, found in Acanthamoeba polyphaga (Amoeba).